Reading from the N-terminus, the 667-residue chain is Fatty acyl-CoA synthetase A (667 aa).

It belongs to the ATP-dependent AMP-binding enzyme family.

It is found in the endosome membrane. The catalysed reaction is a long-chain fatty acid + ATP + CoA = a long-chain fatty acyl-CoA + AMP + diphosphate. Its function is as follows. Long chain fatty acid acyl-CoA synthetases catalyze the formation of a thiester bond between a free fatty acid and coenzyme A during fatty acid metabolic process. May mediate fatty acid retrieval from the lumen of endosomes into the cytoplasm. The protein is Fatty acyl-CoA synthetase A (fcsA) of Dictyostelium discoideum (Social amoeba).